The following is a 306-amino-acid chain: UDP-3-O-acyl-N-acetylglucosamine deacetylase (306 aa).

Residues H79, H238, and D242 each coordinate Zn(2+). The active-site Proton donor is H265.

This sequence belongs to the LpxC family. Zn(2+) is required as a cofactor.

It catalyses the reaction a UDP-3-O-[(3R)-3-hydroxyacyl]-N-acetyl-alpha-D-glucosamine + H2O = a UDP-3-O-[(3R)-3-hydroxyacyl]-alpha-D-glucosamine + acetate. It participates in glycolipid biosynthesis; lipid IV(A) biosynthesis; lipid IV(A) from (3R)-3-hydroxytetradecanoyl-[acyl-carrier-protein] and UDP-N-acetyl-alpha-D-glucosamine: step 2/6. In terms of biological role, catalyzes the hydrolysis of UDP-3-O-myristoyl-N-acetylglucosamine to form UDP-3-O-myristoylglucosamine and acetate, the committed step in lipid A biosynthesis. This is UDP-3-O-acyl-N-acetylglucosamine deacetylase from Shewanella sediminis (strain HAW-EB3).